The following is a 95-amino-acid chain: Aspartyl/glutamyl-tRNA(Asn/Gln) amidotransferase subunit C (95 aa).

It belongs to the GatC family. In terms of assembly, heterotrimer of A, B and C subunits.

The catalysed reaction is L-glutamyl-tRNA(Gln) + L-glutamine + ATP + H2O = L-glutaminyl-tRNA(Gln) + L-glutamate + ADP + phosphate + H(+). It catalyses the reaction L-aspartyl-tRNA(Asn) + L-glutamine + ATP + H2O = L-asparaginyl-tRNA(Asn) + L-glutamate + ADP + phosphate + 2 H(+). In terms of biological role, allows the formation of correctly charged Asn-tRNA(Asn) or Gln-tRNA(Gln) through the transamidation of misacylated Asp-tRNA(Asn) or Glu-tRNA(Gln) in organisms which lack either or both of asparaginyl-tRNA or glutaminyl-tRNA synthetases. The reaction takes place in the presence of glutamine and ATP through an activated phospho-Asp-tRNA(Asn) or phospho-Glu-tRNA(Gln). This chain is Aspartyl/glutamyl-tRNA(Asn/Gln) amidotransferase subunit C, found in Nitrosospira multiformis (strain ATCC 25196 / NCIMB 11849 / C 71).